A 256-amino-acid chain; its full sequence is Imidazole glycerol phosphate synthase subunit HisF (256 aa).

Active-site residues include Asp-11 and Asp-130.

This sequence belongs to the HisA/HisF family. In terms of assembly, heterodimer of HisH and HisF.

It is found in the cytoplasm. The catalysed reaction is 5-[(5-phospho-1-deoxy-D-ribulos-1-ylimino)methylamino]-1-(5-phospho-beta-D-ribosyl)imidazole-4-carboxamide + L-glutamine = D-erythro-1-(imidazol-4-yl)glycerol 3-phosphate + 5-amino-1-(5-phospho-beta-D-ribosyl)imidazole-4-carboxamide + L-glutamate + H(+). It participates in amino-acid biosynthesis; L-histidine biosynthesis; L-histidine from 5-phospho-alpha-D-ribose 1-diphosphate: step 5/9. In terms of biological role, IGPS catalyzes the conversion of PRFAR and glutamine to IGP, AICAR and glutamate. The HisF subunit catalyzes the cyclization activity that produces IGP and AICAR from PRFAR using the ammonia provided by the HisH subunit. In Methylocella silvestris (strain DSM 15510 / CIP 108128 / LMG 27833 / NCIMB 13906 / BL2), this protein is Imidazole glycerol phosphate synthase subunit HisF.